Here is a 564-residue protein sequence, read N- to C-terminus: MTSHVLALAFLLHACTALAWQETNSRSVVAHLDSGIIRGVPRSADGIKFASFLGVPYAKQPVGELRFKELEPLEPWDNILNATNEGPICFQTDVLYGRLMAASEMSEACIYANIHVPWQSLPRVRGTTPLRPILVFIHGGGFAFGSGHEDLHGPEYLVTKNVIVITFNYRLNVFGFLSMNTTKIPGNAGLRDQVTLLRWVQRNAKNFGGDPSDITIAGQSAGASAAHLLTLSKATEGLFKRAILMSGTGMSYFFTTSPLFAAYISKQLLQILGINETDPEEIHRQLIDLPAEKLNEANAVLIEQIGLTTFLPIVESPLPGVTTIIDDDPEILIAEGRGKNVPLLIGFTSSECETFRNRLLNFDLVKKIQDNPTIIIPPKLLFMTPPELLMELAKTIERKYYNGTISIDNFVKSCSDGFYEYPALKLAQKRAETGGAPLYLYRFAYEGQNSIIKKVMGLNHEGVGHIEDLTYVFKVNSMSEALHASPSENDVKMKNLMTGYFLNFIKCSQPTCEDNNSLEVWPANNGMQYEDIVSPTIIRSKEFASRQQDIIEFFDSFTSRSPLE.

Positions 1–19 (MTSHVLALAFLLHACTALA) are cleaved as a signal peptide. The N-linked (GlcNAc...) asparagine glycan is linked to N81. C89 and C109 are joined by a disulfide. An N-linked (GlcNAc...) asparagine glycan is attached at N180. Catalysis depends on S220, which acts as the Acyl-ester intermediate. E351 serves as the catalytic Charge relay system. The N-linked (GlcNAc...) asparagine glycan is linked to N402. H465 acts as the Charge relay system in catalysis. An N-linked (GlcNAc...) asparagine glycan is attached at N515.

The protein belongs to the type-B carboxylesterase/lipase family.

It carries out the reaction juvenile hormone I + H2O = juvenile hormone I carboxylate + methanol + H(+). The catalysed reaction is juvenile hormone III + H2O = juvenile hormone III carboxylate + methanol + H(+). In terms of biological role, JH esterase plays a crucial role in the decrease of JH activity in lepidopteran insects, by hydrolyzing the methyl ester of JH. It is also involved in the transport of JH. The chain is Juvenile hormone esterase from Heliothis virescens (Tobacco budworm moth).